A 316-amino-acid polypeptide reads, in one-letter code: D-alanine--D-alanine ligase (316 aa).

The region spanning 109–304 (KRLWRGMDLP…FDEMVLQILA (196 aa)) is the ATP-grasp domain. 135–190 (AADLGLPLIVKPAREGSSLGMMKVESIEALQSAYREAVIFDTAVFAERWLPGAEYT) contacts ATP. Asp258, Glu271, and Asn273 together coordinate Mg(2+).

It belongs to the D-alanine--D-alanine ligase family. Mg(2+) is required as a cofactor. It depends on Mn(2+) as a cofactor.

The protein resides in the cytoplasm. The enzyme catalyses 2 D-alanine + ATP = D-alanyl-D-alanine + ADP + phosphate + H(+). It functions in the pathway cell wall biogenesis; peptidoglycan biosynthesis. In terms of biological role, cell wall formation. The sequence is that of D-alanine--D-alanine ligase from Nitrosococcus oceani (strain ATCC 19707 / BCRC 17464 / JCM 30415 / NCIMB 11848 / C-107).